The primary structure comprises 178 residues: ATP-dependent protease subunit HslV (178 aa).

The active site involves T7. Na(+) contacts are provided by G162, C165, and T168.

This sequence belongs to the peptidase T1B family. HslV subfamily. A double ring-shaped homohexamer of HslV is capped on each side by a ring-shaped HslU homohexamer. The assembly of the HslU/HslV complex is dependent on binding of ATP.

Its subcellular location is the cytoplasm. It carries out the reaction ATP-dependent cleavage of peptide bonds with broad specificity.. With respect to regulation, allosterically activated by HslU binding. Functionally, protease subunit of a proteasome-like degradation complex believed to be a general protein degrading machinery. The protein is ATP-dependent protease subunit HslV of Ralstonia nicotianae (strain ATCC BAA-1114 / GMI1000) (Ralstonia solanacearum).